The sequence spans 2761 residues: Serine/threonine-protein kinase TEL1 (2761 aa).

The FAT domain maps to 1692 to 2294; that stretch reads PVIPIMLSLG…LYPLISMSLQ (603 aa). Positions 2404 to 2710 constitute a PI3K/PI4K catalytic domain; it reads DPKVLISSSG…DFSELLEEDN (307 aa). The tract at residues 2410–2416 is G-loop; it reads SSSGLSL. Positions 2579–2587 are catalytic loop; the sequence is GLGDRHLNN. Residues 2599 to 2623 form an activation loop region; that stretch reads HIDLGVAFDQGKLLPIPELVPFRLT. The FATC domain occupies 2729–2761; it reads DGLSVEAIVQELLSSATDKQNLATIYMGWSPFY.

This sequence belongs to the PI3/PI4-kinase family. ATM subfamily. As to quaternary structure, associates with DNA double-strand breaks.

The protein resides in the nucleus. It localises to the chromosome. It is found in the telomere. The catalysed reaction is L-seryl-[protein] + ATP = O-phospho-L-seryl-[protein] + ADP + H(+). It carries out the reaction L-threonyl-[protein] + ATP = O-phospho-L-threonyl-[protein] + ADP + H(+). Serine/threonine protein kinase which activates checkpoint signaling upon genotoxic stresses such as ionizing radiation (IR), ultraviolet light (UV), or DNA replication stalling, thereby acting as a DNA damage sensor. Recognizes the substrate consensus sequence [ST]-Q. Phosphorylates histone H2A to form H2AS128ph (gamma-H2A) at sites of DNA damage, involved in the regulation of DNA damage response mechanism. Required for the control of telomere length and genome stability. The chain is Serine/threonine-protein kinase TEL1 (TEL1) from Kluyveromyces lactis (strain ATCC 8585 / CBS 2359 / DSM 70799 / NBRC 1267 / NRRL Y-1140 / WM37) (Yeast).